The chain runs to 313 residues: MDKKSRVLIVGGTGYIGKRIVNASISLGHPTYVLFRPEVVSNIDKVQMLLYFKQLGAKLIEASLDDHQRLVDALKQVDVVISALAGGVLSHHILEQLKLVEAIKEAGNIKRFLPSEFGMDPDIMEHALQPGSITFIDKRKVRRAIEAASIPYTYVSSNMFAGYFAGSLAQLDGHMMPPRDKVLIYGDGNVKGIWVDEDDVGTYTIKSIDDPQTLNKTMYIRPPMNILSQKEVIQIWERLSEQNLDKIYISSQDFLADMKDKSYEEKIVRCHLYQIFFRGDLYNFEIGPNAIEATKLYPEVKYVTMDSYLERYV.

Residues 11–17 (GGTGYIG), arginine 36, and lysine 45 contribute to the NADP(+) site. Lysine 138 acts as the Proton acceptor in catalysis. NADP(+) is bound at residue arginine 142. Histidine 271 provides a ligand contact to substrate.

It belongs to the NmrA-type oxidoreductase family. Isoflavone reductase subfamily. As to quaternary structure, dimer.

It catalyses the reaction (+)-lariciresinol + NADP(+) = (+)-pinoresinol + NADPH + H(+). It carries out the reaction (-)-lariciresinol + NADP(+) = (-)-pinoresinol + NADPH + H(+). The enzyme catalyses (+)-secoisolariciresinol + NADP(+) = (-)-lariciresinol + NADPH + H(+). Its function is as follows. Reductase involved in lignan biosynthesis. Catalyzes the enantioselective sequential conversion of (-)-pinoresinol into (-)-lariciresinol and of (-)-lariciresinol into (+)-secoisolariciresinol. Can also convert with a lower efficiency (+)-pinoresinol into (+)-lariciresinol, but not (+)-lariciresinol into (-)-secoisolariciresinol. Abstracts the 4R-hydride from the NADPH cofactor during catalysis. The polypeptide is Bifunctional pinoresinol-lariciresinol reductase 1 (PLR_Tp1) (Thuja plicata (Western red-cedar)).